The primary structure comprises 229 residues: DNA mismatch repair protein MutH (229 aa).

The protein belongs to the MutH family.

Its subcellular location is the cytoplasm. Functionally, sequence-specific endonuclease that cleaves unmethylated GATC sequences. It is involved in DNA mismatch repair. In Escherichia coli O45:K1 (strain S88 / ExPEC), this protein is DNA mismatch repair protein MutH.